The sequence spans 251 residues: Triosephosphate isomerase (251 aa).

Position 12 to 14 (12 to 14 (NWK)) interacts with substrate. Residue histidine 99 is the Electrophile of the active site. The active-site Proton acceptor is glutamate 169. Residues glycine 175, serine 214, and 235 to 236 (GG) contribute to the substrate site.

The protein belongs to the triosephosphate isomerase family. As to quaternary structure, homodimer.

It is found in the cytoplasm. It catalyses the reaction D-glyceraldehyde 3-phosphate = dihydroxyacetone phosphate. Its pathway is carbohydrate biosynthesis; gluconeogenesis. It participates in carbohydrate degradation; glycolysis; D-glyceraldehyde 3-phosphate from glycerone phosphate: step 1/1. Functionally, involved in the gluconeogenesis. Catalyzes stereospecifically the conversion of dihydroxyacetone phosphate (DHAP) to D-glyceraldehyde-3-phosphate (G3P). In Bradyrhizobium sp. (strain ORS 278), this protein is Triosephosphate isomerase.